Here is a 312-residue protein sequence, read N- to C-terminus: MTSAATTSDVVHARAPGKINVSLTVGALQEDGYHDVATAYQAVGLYEDVWATKADGFSVEFGGSIDTSHLTTGADNLAVRAARLLARSTGYRGGVHLRIEKNVPIAGGMGGGSADAAATLLACDTLWGTERTRDQLLALGAELGADVPFALAGGTAIGTGRGDRLSPALAKGTFQWVLAIAEFGVSTPDVYGELDKHRERHAQDIFPAQQIPQVDSGVLQALRAGDPHMLAEVLHNDLQAPALHLAPGLGEVLQLGEENGALAGIVSGSGPTVAFLAADLDSALELQIALSAARLTVIRATGPVHGARIITG.

Residue lysine 18 is part of the active site. Residue 104–114 (PIAGGMGGGSA) participates in ATP binding. The active site involves aspartate 146.

Belongs to the GHMP kinase family. IspE subfamily.

The catalysed reaction is 4-CDP-2-C-methyl-D-erythritol + ATP = 4-CDP-2-C-methyl-D-erythritol 2-phosphate + ADP + H(+). The protein operates within isoprenoid biosynthesis; isopentenyl diphosphate biosynthesis via DXP pathway; isopentenyl diphosphate from 1-deoxy-D-xylulose 5-phosphate: step 3/6. Functionally, catalyzes the phosphorylation of the position 2 hydroxy group of 4-diphosphocytidyl-2C-methyl-D-erythritol. In Clavibacter michiganensis subsp. michiganensis (strain NCPPB 382), this protein is 4-diphosphocytidyl-2-C-methyl-D-erythritol kinase.